The sequence spans 273 residues: 2-dehydro-3-deoxyphosphooctonate aldolase (273 aa).

Belongs to the KdsA family.

Its subcellular location is the cytoplasm. It carries out the reaction D-arabinose 5-phosphate + phosphoenolpyruvate + H2O = 3-deoxy-alpha-D-manno-2-octulosonate-8-phosphate + phosphate. The protein operates within carbohydrate biosynthesis; 3-deoxy-D-manno-octulosonate biosynthesis; 3-deoxy-D-manno-octulosonate from D-ribulose 5-phosphate: step 2/3. Its pathway is bacterial outer membrane biogenesis; lipopolysaccharide biosynthesis. The polypeptide is 2-dehydro-3-deoxyphosphooctonate aldolase (Desulfatibacillum aliphaticivorans).